Consider the following 210-residue polypeptide: Oxygen-insensitive NADPH nitroreductase (210 aa).

150–155 (GVSLMG) lines the NADP(+) pocket.

This sequence belongs to the nitroreductase family.

Its function is as follows. Reduction of a variety of nitroaromatic compounds using NADPH as source of reducing equivalents; two electrons are transferred. In Helicobacter acinonychis (strain Sheeba), this protein is Oxygen-insensitive NADPH nitroreductase (rdxA).